The following is a 302-amino-acid chain: UDP-3-O-acyl-N-acetylglucosamine deacetylase (302 aa).

Residues H78, H237, and D241 each contribute to the Zn(2+) site. The Proton donor role is filled by H264.

It belongs to the LpxC family. The cofactor is Zn(2+).

It carries out the reaction a UDP-3-O-[(3R)-3-hydroxyacyl]-N-acetyl-alpha-D-glucosamine + H2O = a UDP-3-O-[(3R)-3-hydroxyacyl]-alpha-D-glucosamine + acetate. Its pathway is glycolipid biosynthesis; lipid IV(A) biosynthesis; lipid IV(A) from (3R)-3-hydroxytetradecanoyl-[acyl-carrier-protein] and UDP-N-acetyl-alpha-D-glucosamine: step 2/6. In terms of biological role, catalyzes the hydrolysis of UDP-3-O-myristoyl-N-acetylglucosamine to form UDP-3-O-myristoylglucosamine and acetate, the committed step in lipid A biosynthesis. In Hahella chejuensis (strain KCTC 2396), this protein is UDP-3-O-acyl-N-acetylglucosamine deacetylase.